We begin with the raw amino-acid sequence, 164 residues long: Putative 4-hydroxy-4-methyl-2-oxoglutarate aldolase (164 aa).

Substrate is bound by residues 80–83 (GGNL) and R102. D103 provides a ligand contact to a divalent metal cation.

Belongs to the class II aldolase/RraA-like family. Homotrimer. A divalent metal cation serves as cofactor.

The catalysed reaction is 4-hydroxy-4-methyl-2-oxoglutarate = 2 pyruvate. It catalyses the reaction oxaloacetate + H(+) = pyruvate + CO2. Catalyzes the aldol cleavage of 4-hydroxy-4-methyl-2-oxoglutarate (HMG) into 2 molecules of pyruvate. Also contains a secondary oxaloacetate (OAA) decarboxylase activity due to the common pyruvate enolate transition state formed following C-C bond cleavage in the retro-aldol and decarboxylation reactions. This is Putative 4-hydroxy-4-methyl-2-oxoglutarate aldolase from Paraburkholderia phytofirmans (strain DSM 17436 / LMG 22146 / PsJN) (Burkholderia phytofirmans).